The chain runs to 103 residues: Viscotoxin-B (103 aa).

Positions 1 to 6 (FRNVES) are cleaved as a signal peptide. 3 disulfides stabilise this stretch: C9–C46, C10–C38, and C22–C32. Positions 53–103 (FYCTLGCQSSKCASITTPPNSEVDAEAVRCKAACSNLCDFGVTTNQEIQDD) are cleaved as a propeptide — acidic domain.

This sequence belongs to the plant thionin (TC 1.C.44) family.

It is found in the secreted. Functionally, thionins are small plant proteins which are toxic to animal cells. They seem to exert their toxic effect at the level of the cell membrane. Their precise function is not known. The chain is Viscotoxin-B (THI2.2) from Viscum album (European mistletoe).